The following is a 175-amino-acid chain: Gamma-crystallin B (175 aa).

Beta/gamma crystallin 'Greek key' domains lie at 2–40 and 41–83; these read GKIT…RVDS and GCWM…RLIP. The segment at 84 to 88 is connecting peptide; the sequence is QHSGT. Beta/gamma crystallin 'Greek key' domains follow at residues 89–129 and 130–172; these read YRMR…NVME and GCWV…RRVM.

This sequence belongs to the beta/gamma-crystallin family.

In terms of biological role, crystallins are the dominant structural components of the vertebrate eye lens. This Rattus norvegicus (Rat) protein is Gamma-crystallin B (Crygb).